We begin with the raw amino-acid sequence, 310 residues long: MRRLIPILLGSLVLSLSILVAPAASWAYPFWAQQNYDNPREATGKIVCANCHLAQKTTQAEVPQSVLPDSVFKAVVKIPYKKDTTEISSDGSDVPLQVGAVVMLPDGFRLAPQDRWSEEIKEETKGVFFTQYSEEKENILLVGPLPGDNNKEIVFPILSPDPATDSSIQFGKYSIHVGGNRGRGQILPTGEKTNNNAFTATEAGTITSIKSGKNGESDIKLKTDSGKVISETIPAGPSLLVKVDDKVEAGAPLTSDPNSGGFGQLDTEVVLQNPVRIYGLLAFFVAVSLAQILLVLKKKQVEKVQAAEGI.

Residues Met-1–Ala-23 form the signal peptide. Positions 28, 48, 51, and 52 each coordinate heme. The chain crosses the membrane as a helical span at residues Ile-277 to Lys-297.

This sequence belongs to the cytochrome f family. The 4 large subunits of the cytochrome b6-f complex are cytochrome b6, subunit IV (17 kDa polypeptide, PetD), cytochrome f and the Rieske protein, while the 4 small subunits are PetG, PetL, PetM and PetN. The complex functions as a dimer. It depends on heme as a cofactor.

It is found in the cellular thylakoid membrane. Component of the cytochrome b6-f complex, which mediates electron transfer between photosystem II (PSII) and photosystem I (PSI), cyclic electron flow around PSI, and state transitions. This is Cytochrome f from Prochlorococcus marinus (strain MIT 9313).